An 802-amino-acid chain; its full sequence is Oligophrenin-1 (802 aa).

Positions 265–368 constitute a PH domain; sequence QPTIEGYLYT…WMEAMDGKEP (104 aa). The region spanning 380-564 is the Rho-GAP domain; the sequence is MELNEVGFKF…ILIEHFGKIY (185 aa). Disordered stretches follow at residues 641 to 663 and 682 to 802; these read QKSG…CQTE and TKAI…GDES. Residues 716 to 732 show a composition bias toward basic and acidic residues; sequence HHKEGDTDCFSKVRPPG. Polar residues predominate over residues 751-768; sequence SSTSQKPESKPETVSSNA.

Interacts with HOMER1. Interacts with AMPA receptor complexes. Interacts with SH3GL2 (endophilin-A1). Interacts (via C-terminus) with NR1D1. As to expression, high expression in brain, particularly in the cerebellum, hippocampus, thalamus, frontal lobes, sensory cortex. Found in the myelin sheaths of peripheral nerves, chromaffin cells within the adrenal medulla, and in extra-adrenal chromaffin cells associated with celiac ganglia.

It localises to the postsynapse. The protein resides in the presynapse. It is found in the cell projection. Its subcellular location is the axon. The protein localises to the dendritic spine. It localises to the dendrite. The protein resides in the cytoplasm. In terms of biological role, stimulates GTP hydrolysis of members of the Rho family. Its action on RHOA activity and signaling is implicated in growth and stabilization of dendritic spines, and therefore in synaptic function, in hippocampal neurons. Critical for the stabilization of AMPA receptors at postsynaptic sites. Critical for the regulation of synaptic vesicle endocytosis at pre-synaptic terminals. Required for the localization of NR1D1 to dendrites, can suppress its repressor activity and protect it from proteasomal degradation. The sequence is that of Oligophrenin-1 (Ophn1) from Rattus norvegicus (Rat).